Here is a 336-residue protein sequence, read N- to C-terminus: Probable allantoicase (336 aa).

Belongs to the allantoicase family.

The catalysed reaction is allantoate + H2O = (S)-ureidoglycolate + urea. It participates in nitrogen metabolism; (S)-allantoin degradation; (S)-ureidoglycolate from allantoate (aminidohydrolase route): step 1/1. This is Probable allantoicase from Acinetobacter baumannii (strain ATCC 17978 / DSM 105126 / CIP 53.77 / LMG 1025 / NCDC KC755 / 5377).